The following is a 96-amino-acid chain: Myosuppressin (96 aa).

An N-terminal signal peptide occupies residues 1–24; the sequence is MALGNGYYCAVVCVVLACASVVLC. A propeptide spanning residues 25–80 is cleaved from the precursor; sequence APAQLCAGAADDDPRAARFCQALNTFLELYAEAAGEQVPEYQALVRDYPQLLDTGM. Position 83 is a pyrrolidone carboxylic acid; partial (Gln-83). Phe-92 bears the Phenylalanine amide mark. Arg-96 is a propeptide.

Belongs to the myosuppressin family. In terms of tissue distribution, expressed in corpora cardiaca (CC), corpora allata (CA), antennal lobe (AL) and gnathal ganglion (GNG) (at protein level). In its non-pyroglutamate form, expression in GNG detected in all animals, in AL, CC and in CA in most animals (at protein level). In its pyroglutamate form, expression in CC, CA and GNG detected in all animals, in AL in some animals (at protein level).

The protein resides in the secreted. Myoinhibiting neuropeptide. The protein is Myosuppressin of Agrotis ipsilon (Black cutworm moth).